An 84-amino-acid chain; its full sequence is Small ribosomal subunit protein bS16 (84 aa).

This sequence belongs to the bacterial ribosomal protein bS16 family.

The protein is Small ribosomal subunit protein bS16 of Desulforapulum autotrophicum (strain ATCC 43914 / DSM 3382 / VKM B-1955 / HRM2) (Desulfobacterium autotrophicum).